A 95-amino-acid polypeptide reads, in one-letter code: Alpha-defensin 20 (95 aa).

Positions 1 to 19 (MKTLVLLSALVLLAFQVQA) are cleaved as a signal peptide. Positions 20–58 (DPIQNTDEETNTEEQPGEEDQAVSVSFGDPEGSALHEKS) are excised as a propeptide. Residues 22-57 (IQNTDEETNTEEQPGEEDQAVSVSFGDPEGSALHEK) are disordered. The span at 25–40 (TDEETNTEEQPGEEDQ) shows a compositional bias: acidic residues. 3 disulfide bridges follow: Cys64–Cys89, Cys66–Cys81, and Cys71–Cys88.

The protein belongs to the alpha-defensin family.

It localises to the secreted. May have microbicidal activities. This chain is Alpha-defensin 20 (Defa20), found in Mus musculus (Mouse).